The following is a 148-amino-acid chain: Snaclec 2 (148 aa).

An N-terminal signal peptide occupies residues M1–A23. Disulfide bonds link C27–C38, C55–C144, and C121–C136. The C-type lectin domain maps to Y34–K145.

This sequence belongs to the snaclec family. As to quaternary structure, heterodimer; disulfide-linked. Expressed by the venom gland.

The protein localises to the secreted. Interferes with one step of hemostasis (modulation of platelet aggregation, or coagulation cascade, for example). This Echis ocellatus (Ocellated saw-scaled viper) protein is Snaclec 2.